The primary structure comprises 424 residues: Phosphomethylpyrimidine synthase (424 aa).

Residues methionine 94, tyrosine 123, histidine 162, 184-186, 225-228, and glutamate 264 contribute to the substrate site; these read SRG and NGMR. Residue histidine 268 participates in Zn(2+) binding. Tyrosine 291 serves as a coordination point for substrate. Histidine 332 provides a ligand contact to Zn(2+). Positions 406, 409, and 413 each coordinate [4Fe-4S] cluster.

This sequence belongs to the ThiC family. The cofactor is [4Fe-4S] cluster.

It catalyses the reaction 5-amino-1-(5-phospho-beta-D-ribosyl)imidazole + S-adenosyl-L-methionine = 4-amino-2-methyl-5-(phosphooxymethyl)pyrimidine + CO + 5'-deoxyadenosine + formate + L-methionine + 3 H(+). It functions in the pathway cofactor biosynthesis; thiamine diphosphate biosynthesis. Its function is as follows. Catalyzes the synthesis of the hydroxymethylpyrimidine phosphate (HMP-P) moiety of thiamine from aminoimidazole ribotide (AIR) in a radical S-adenosyl-L-methionine (SAM)-dependent reaction. This Methanosphaerula palustris (strain ATCC BAA-1556 / DSM 19958 / E1-9c) protein is Phosphomethylpyrimidine synthase.